We begin with the raw amino-acid sequence, 257 residues long: NAD-capped RNA hydrolase NudC (257 aa).

Arginine 69 contacts substrate. Zn(2+) contacts are provided by cysteine 98 and cysteine 101. Glutamate 111 lines the substrate pocket. The Zn(2+) site is built by cysteine 116 and cysteine 119. Tyrosine 124 lines the substrate pocket. The region spanning 125-248 (PQIAPCIIVA…TVARRLIEDT (124 aa)) is the Nudix hydrolase domain. The a divalent metal cation site is built by alanine 158, glutamate 174, and glutamate 178. Residues 159-180 (GFVEVGETLEQAVAREVMEESG) carry the Nudix box motif. 192–199 (QPWPFPQS) is a substrate binding site. Position 219 (glutamate 219) interacts with a divalent metal cation. Alanine 241 contacts substrate.

It belongs to the Nudix hydrolase family. NudC subfamily. Homodimer. Mg(2+) is required as a cofactor. Mn(2+) serves as cofactor. It depends on Zn(2+) as a cofactor.

It catalyses the reaction a 5'-end NAD(+)-phospho-ribonucleoside in mRNA + H2O = a 5'-end phospho-adenosine-phospho-ribonucleoside in mRNA + beta-nicotinamide D-ribonucleotide + 2 H(+). The enzyme catalyses NAD(+) + H2O = beta-nicotinamide D-ribonucleotide + AMP + 2 H(+). The catalysed reaction is NADH + H2O = reduced beta-nicotinamide D-ribonucleotide + AMP + 2 H(+). In terms of biological role, mRNA decapping enzyme that specifically removes the nicotinamide adenine dinucleotide (NAD) cap from a subset of mRNAs by hydrolyzing the diphosphate linkage to produce nicotinamide mononucleotide (NMN) and 5' monophosphate mRNA. The NAD-cap is present at the 5'-end of some mRNAs and stabilizes RNA against 5'-processing. Has preference for mRNAs with a 5'-end purine. Catalyzes the hydrolysis of a broad range of dinucleotide pyrophosphates. The protein is NAD-capped RNA hydrolase NudC of Salmonella choleraesuis (strain SC-B67).